Here is a 311-residue protein sequence, read N- to C-terminus: tRNA-cytidine(32) 2-sulfurtransferase (311 aa).

The PP-loop motif signature appears at 47–52; that stretch reads SGGKDS. Positions 122, 125, and 213 each coordinate [4Fe-4S] cluster.

Belongs to the TtcA family. In terms of assembly, homodimer. Requires Mg(2+) as cofactor. The cofactor is [4Fe-4S] cluster.

It localises to the cytoplasm. The catalysed reaction is cytidine(32) in tRNA + S-sulfanyl-L-cysteinyl-[cysteine desulfurase] + AH2 + ATP = 2-thiocytidine(32) in tRNA + L-cysteinyl-[cysteine desulfurase] + A + AMP + diphosphate + H(+). The protein operates within tRNA modification. In terms of biological role, catalyzes the ATP-dependent 2-thiolation of cytidine in position 32 of tRNA, to form 2-thiocytidine (s(2)C32). The sulfur atoms are provided by the cysteine/cysteine desulfurase (IscS) system. This Salmonella paratyphi A (strain ATCC 9150 / SARB42) protein is tRNA-cytidine(32) 2-sulfurtransferase.